We begin with the raw amino-acid sequence, 343 residues long: Signal peptide peptidase 1 (343 aa).

The Lumenal segment spans residues 1-19; that stretch reads MKTHERAANLALAGLSLAP. The helical transmembrane segment at 20-40 threads the bilayer; sequence LVVKVEPNVNVILTACLAVYV. Residues 41–62 are Cytoplasmic-facing; it reads GCYRSVKPTPPSETMSKEHAMR. A helical transmembrane segment spans residues 63–83; sequence FPLVGSAMLLSLFLLFKFLSK. Over 84–87 the chain is Lumenal; that stretch reads DLVN. The helical transmembrane segment at 88–108 threads the bilayer; the sequence is AVLTAYFFILGIAALCATLLP. Residues 109–136 lie on the Cytoplasmic side of the membrane; that stretch reads SIKRFLPKEWNDNAIVWCAPFFHSLSVE. A helical transmembrane segment spans residues 137-157; sequence FTKSQVVASIPGFFFCIWYAA. Over 158–160 the chain is Lumenal; the sequence is KKH. A helical membrane pass occupies residues 161–181; it reads WLANNVLGISFCIQGIEMLSL. Residues 182–188 are Cytoplasmic-facing; it reads GSFKTGA. The chain crosses the membrane as a helical span at residues 189–209; the sequence is ILLAGLFFYDIFWVFFTPVMV. Residue D198 is part of the active site. At 210–230 the chain is on the lumenal side; it reads SVAKSFDAPIKLLFPTGDAAR. Residues 231–251 form a helical membrane-spanning segment; that stretch reads PFSMLGLGDIVIPGIFVALAL. Residue D239 is part of the active site. The Cytoplasmic segment spans residues 252-266; it reads RFDVSRGIKNRYFNS. Residues 267–287 traverse the membrane as a helical segment; the sequence is AFLGYTVGLTVTIIVMNWFQA. Over 288-290 the chain is Lumenal; that stretch reads AQP. The PAL signature appears at 290-292; sequence PAL. The chain crosses the membrane as a helical span at residues 291–311; it reads ALLYIVPGVIGFVAVHCLWNG. Residues 312–343 are Cytoplasmic-facing; the sequence is EVKPLLEYNESKAEEEDAVEEDTDSKQNKKEE. The tract at residues 322–343 is disordered; it reads SKAEEEDAVEEDTDSKQNKKEE. Residues 324-334 show a composition bias toward acidic residues; sequence AEEEDAVEEDT. The Endoplasmic reticulum targeting signal signature appears at 340–343; it reads KKEE.

It belongs to the peptidase A22B family. Ubiquitous.

It localises to the endoplasmic reticulum membrane. Its function is as follows. Intramembrane-cleaving aspartic protease (I-CLiP) that cleaves type II membrane signal peptides in the hydrophobic plane of the membrane. Catalyzes intramembrane proteolysis of some signal peptides after they have been cleaved from a preprotein, resulting in the release of the fragment from the ER membrane into the cytoplasm. This is Signal peptide peptidase 1 (SPP1) from Oryza sativa subsp. japonica (Rice).